We begin with the raw amino-acid sequence, 795 residues long: Phenylalanine--tRNA ligase beta subunit (795 aa).

Residues 39–148 form the tRNA-binding domain; sequence AGRFTGVVVG…AEAPIGQDIR (110 aa). Positions 401–476 constitute a B5 domain; that stretch reads PQPATITLRR…RVYGYDAIPN (76 aa). Mg(2+) contacts are provided by Asp-454, Asp-460, Glu-463, and Glu-464. Residues 701–794 form the FDX-ACB domain; it reads SRFPANRRDI…LKQRFQASLR (94 aa).

Belongs to the phenylalanyl-tRNA synthetase beta subunit family. Type 1 subfamily. In terms of assembly, tetramer of two alpha and two beta subunits. Mg(2+) is required as a cofactor.

The protein localises to the cytoplasm. It catalyses the reaction tRNA(Phe) + L-phenylalanine + ATP = L-phenylalanyl-tRNA(Phe) + AMP + diphosphate + H(+). In Sodalis glossinidius (strain morsitans), this protein is Phenylalanine--tRNA ligase beta subunit.